The following is a 109-amino-acid chain: Large ribosomal subunit protein uL22 (109 aa).

This sequence belongs to the universal ribosomal protein uL22 family. As to quaternary structure, part of the 50S ribosomal subunit.

Its function is as follows. This protein binds specifically to 23S rRNA; its binding is stimulated by other ribosomal proteins, e.g. L4, L17, and L20. It is important during the early stages of 50S assembly. It makes multiple contacts with different domains of the 23S rRNA in the assembled 50S subunit and ribosome. The globular domain of the protein is located near the polypeptide exit tunnel on the outside of the subunit, while an extended beta-hairpin is found that lines the wall of the exit tunnel in the center of the 70S ribosome. The sequence is that of Large ribosomal subunit protein uL22 from Dehalococcoides mccartyi (strain ATCC BAA-2100 / JCM 16839 / KCTC 5957 / BAV1).